The primary structure comprises 286 residues: Shikimate dehydrogenase (NADP(+)) (286 aa).

Shikimate contacts are provided by residues 19-21 (SVS) and T66. K70 acts as the Proton acceptor in catalysis. Residues N91 and D106 each contribute to the shikimate site. Residues 130-134 (GAGGS) and A225 contribute to the NADP(+) site. A shikimate-binding site is contributed by Y227. G248 serves as a coordination point for NADP(+).

It belongs to the shikimate dehydrogenase family. Homodimer.

It catalyses the reaction shikimate + NADP(+) = 3-dehydroshikimate + NADPH + H(+). It functions in the pathway metabolic intermediate biosynthesis; chorismate biosynthesis; chorismate from D-erythrose 4-phosphate and phosphoenolpyruvate: step 4/7. Its function is as follows. Involved in the biosynthesis of the chorismate, which leads to the biosynthesis of aromatic amino acids. Catalyzes the reversible NADPH linked reduction of 3-dehydroshikimate (DHSA) to yield shikimate (SA). The protein is Shikimate dehydrogenase (NADP(+)) of Dehalococcoides mccartyi (strain CBDB1).